Reading from the N-terminus, the 410-residue chain is MPYSTNKELILGIMVGTAGISLLLLWYHKVRKPGIAMKLPEFLSLGNTFNSITLQDEIHDDQGTTVIFQERQLQILEKLNELLTNMEELKEEIRFLKEAIPKLEEYIQDELGGKITVHKISPQHRARKRRLPTIQSSATSNSSEEAESEGGYITANTDTEEQSFPVPKAFNTRVEELNLDVLLQKVDHLRMSESGKSESFELLRDHKEKFRDEIEFMWRFARAYGDMYELSTNTQEKKHYANIGKTLSERAINRAPMNGHCHLWYAVLCGYVSEFEGLQNKINYGHLFKEHLDIAIKLLPEEPFLYYLKGRYCYTVSKLSWIEKKMAATLFGKIPSSTVQEALHNFLKAEELCPGYSNPNYMYLAKCYTDLEENQNALKFCNLALLLPTVTKEDKEAQKEMQKIMTSLKR.

Residues 9-28 form a helical membrane-spanning segment; the sequence is LILGIMVGTAGISLLLLWYH. Serine 51 carries the post-translational modification Phosphoserine. A coiled-coil region spans residues 68-110; sequence FQERQLQILEKLNELLTNMEELKEEIRFLKEAIPKLEEYIQDE. Serine 121 is subject to Phosphoserine. Over residues 122-131 the composition is skewed to basic residues; the sequence is PQHRARKRRL. The segment at 122 to 164 is disordered; that stretch reads PQHRARKRRLPTIQSSATSNSSEEAESEGGYITANTDTEEQSF. Position 139 is a phosphothreonine (threonine 139). Phosphotyrosine is present on tyrosine 152. A phosphothreonine mark is found at threonine 154 and threonine 157.

Belongs to the RMDN family. In terms of assembly, interacts with microtubules.

Its subcellular location is the membrane. The protein resides in the cytoplasm. It localises to the cytoskeleton. It is found in the spindle. The protein localises to the spindle pole. The sequence is that of Regulator of microtubule dynamics protein 2 (RMDN2) from Homo sapiens (Human).